Reading from the N-terminus, the 197-residue chain is 3-isopropylmalate dehydratase small subunit (197 aa).

This sequence belongs to the LeuD family. LeuD type 1 subfamily. As to quaternary structure, heterodimer of LeuC and LeuD.

The catalysed reaction is (2R,3S)-3-isopropylmalate = (2S)-2-isopropylmalate. The protein operates within amino-acid biosynthesis; L-leucine biosynthesis; L-leucine from 3-methyl-2-oxobutanoate: step 2/4. Catalyzes the isomerization between 2-isopropylmalate and 3-isopropylmalate, via the formation of 2-isopropylmaleate. The protein is 3-isopropylmalate dehydratase small subunit of Mycobacterium sp. (strain KMS).